We begin with the raw amino-acid sequence, 463 residues long: NADH-ubiquinone oxidoreductase chain 4 (463 aa).

The next 13 membrane-spanning stretches (helical) occupy residues 24 to 44 (LWAG…IVLN), 62 to 82 (TISA…LIAS), 98 to 118 (IIMI…LELI), 119 to 139 (LFYI…TRWG), 151 to 171 (FMFY…AIYI), 198 to 218 (WALS…HLWL), 232 to 252 (ILAA…IALF), 260 to 280 (LSLA…VICV), 285 to 305 (LKAL…AAIF), 310 to 330 (WGMN…SALF), 353 to 373 (LLLP…LGLP), 404 to 424 (VFGA…TPFT), and 442 to 462 (LHIL…IAWL).

The protein belongs to the complex I subunit 4 family.

The protein resides in the mitochondrion membrane. It catalyses the reaction a ubiquinone + NADH + 5 H(+)(in) = a ubiquinol + NAD(+) + 4 H(+)(out). Core subunit of the mitochondrial membrane respiratory chain NADH dehydrogenase (Complex I) that is believed to belong to the minimal assembly required for catalysis. Complex I functions in the transfer of electrons from NADH to the respiratory chain. The immediate electron acceptor for the enzyme is believed to be ubiquinone. In Strongylocentrotus purpuratus (Purple sea urchin), this protein is NADH-ubiquinone oxidoreductase chain 4 (ND4).